The sequence spans 217 residues: UPF0502 protein ESA_02280 (217 aa).

It belongs to the UPF0502 family.

The protein is UPF0502 protein ESA_02280 of Cronobacter sakazakii (strain ATCC BAA-894) (Enterobacter sakazakii).